The chain runs to 705 residues: DNA ligase (705 aa).

NAD(+) is bound by residues D42–D46, S91–L92, and E125. K127 functions as the N6-AMP-lysine intermediate in the catalytic mechanism. NAD(+) is bound by residues R148, E183, K299, and K323. Zn(2+)-binding residues include C428, C431, C446, and C452. In terms of domain architecture, BRCT spans T626–L705.

It belongs to the NAD-dependent DNA ligase family. LigA subfamily. Mg(2+) serves as cofactor. Mn(2+) is required as a cofactor.

The catalysed reaction is NAD(+) + (deoxyribonucleotide)n-3'-hydroxyl + 5'-phospho-(deoxyribonucleotide)m = (deoxyribonucleotide)n+m + AMP + beta-nicotinamide D-nucleotide.. In terms of biological role, DNA ligase that catalyzes the formation of phosphodiester linkages between 5'-phosphoryl and 3'-hydroxyl groups in double-stranded DNA using NAD as a coenzyme and as the energy source for the reaction. It is essential for DNA replication and repair of damaged DNA. This Roseobacter denitrificans (strain ATCC 33942 / OCh 114) (Erythrobacter sp. (strain OCh 114)) protein is DNA ligase.